A 355-amino-acid chain; its full sequence is Ubiquinone biosynthesis protein COQ4 homolog, mitochondrial (355 aa).

Residues His-134, Asp-135, His-138, and Glu-150 each contribute to the Zn(2+) site.

This sequence belongs to the COQ4 family. As to quaternary structure, component of a multi-subunit COQ enzyme complex. Zn(2+) is required as a cofactor.

Its subcellular location is the mitochondrion inner membrane. The catalysed reaction is a 4-hydroxy-3-methoxy-5-(all-trans-polyprenyl)benzoate + H(+) = a 2-methoxy-6-(all-trans-polyprenyl)phenol + CO2. It participates in cofactor biosynthesis; ubiquinone biosynthesis. Lyase that catalyzes the C1-decarboxylation of 4-hydroxy-3-methoxy-5-(all-trans-polyprenyl)benzoic acid into 2-methoxy-6-(all-trans-polyprenyl)phenol during ubiquinone biosynthesis. The chain is Ubiquinone biosynthesis protein COQ4 homolog, mitochondrial from Plasmodium vivax (strain Salvador I).